The following is a 709-amino-acid chain: Elongation factor G (709 aa).

Residues 8 to 290 (NRYRNIGISA…AVIQYMPAPQ (283 aa)) enclose the tr-type G domain. Residues 17-24 (AHIDAGKT), 88-92 (DTPGH), and 142-145 (NKMD) each bind GTP.

This sequence belongs to the TRAFAC class translation factor GTPase superfamily. Classic translation factor GTPase family. EF-G/EF-2 subfamily.

Its subcellular location is the cytoplasm. In terms of biological role, catalyzes the GTP-dependent ribosomal translocation step during translation elongation. During this step, the ribosome changes from the pre-translocational (PRE) to the post-translocational (POST) state as the newly formed A-site-bound peptidyl-tRNA and P-site-bound deacylated tRNA move to the P and E sites, respectively. Catalyzes the coordinated movement of the two tRNA molecules, the mRNA and conformational changes in the ribosome. This is Elongation factor G from Psychrobacter sp. (strain PRwf-1).